We begin with the raw amino-acid sequence, 166 residues long: NADH-quinone oxidoreductase subunit C (166 aa).

It belongs to the complex I 30 kDa subunit family. In terms of assembly, NDH-1 is composed of 14 different subunits. Subunits NuoB, C, D, E, F, and G constitute the peripheral sector of the complex.

Its subcellular location is the cell inner membrane. The enzyme catalyses a quinone + NADH + 5 H(+)(in) = a quinol + NAD(+) + 4 H(+)(out). Functionally, NDH-1 shuttles electrons from NADH, via FMN and iron-sulfur (Fe-S) centers, to quinones in the respiratory chain. The immediate electron acceptor for the enzyme in this species is believed to be a menaquinone. Couples the redox reaction to proton translocation (for every two electrons transferred, four hydrogen ions are translocated across the cytoplasmic membrane), and thus conserves the redox energy in a proton gradient. The protein is NADH-quinone oxidoreductase subunit C of Chlorobium phaeobacteroides (strain DSM 266 / SMG 266 / 2430).